A 219-amino-acid chain; its full sequence is UPF0173 metal-dependent hydrolase Mhun_1705 (219 aa).

It belongs to the UPF0173 family.

The chain is UPF0173 metal-dependent hydrolase Mhun_1705 from Methanospirillum hungatei JF-1 (strain ATCC 27890 / DSM 864 / NBRC 100397 / JF-1).